The chain runs to 239 residues: 1-(5-phosphoribosyl)-5-[(5-phosphoribosylamino)methylideneamino] imidazole-4-carboxamide isomerase (239 aa).

Catalysis depends on Asp8, which acts as the Proton acceptor. Asp129 functions as the Proton donor in the catalytic mechanism.

The protein belongs to the HisA/HisF family.

It localises to the cytoplasm. It catalyses the reaction 1-(5-phospho-beta-D-ribosyl)-5-[(5-phospho-beta-D-ribosylamino)methylideneamino]imidazole-4-carboxamide = 5-[(5-phospho-1-deoxy-D-ribulos-1-ylimino)methylamino]-1-(5-phospho-beta-D-ribosyl)imidazole-4-carboxamide. Its pathway is amino-acid biosynthesis; L-histidine biosynthesis; L-histidine from 5-phospho-alpha-D-ribose 1-diphosphate: step 4/9. The sequence is that of 1-(5-phosphoribosyl)-5-[(5-phosphoribosylamino)methylideneamino] imidazole-4-carboxamide isomerase from Bacillus thuringiensis (strain Al Hakam).